The primary structure comprises 254 residues: Nickel import ATP-binding protein NikD (254 aa).

The ABC transporter domain occupies 2-241; the sequence is PQQIELRNIA…PKHAVTRSLV (240 aa). 36 to 43 contributes to the ATP binding site; sequence GGSGSGKS.

This sequence belongs to the ABC transporter superfamily. Nickel importer (TC 3.A.1.5.3) family. As to quaternary structure, the complex is composed of two ATP-binding proteins (NikD and NikE), two transmembrane proteins (NikB and NikC) and a solute-binding protein (NikA).

The protein resides in the cell inner membrane. It carries out the reaction Ni(2+)(out) + ATP + H2O = Ni(2+)(in) + ADP + phosphate + H(+). Part of the ABC transporter complex NikABCDE involved in nickel import. Responsible for energy coupling to the transport system. This Escherichia coli O157:H7 protein is Nickel import ATP-binding protein NikD.